Reading from the N-terminus, the 361-residue chain is Probable galacturonosyltransferase-like 7 (361 aa).

The helical; Signal-anchor for type II membrane protein transmembrane segment at methionine 1–serine 21 threads the bilayer. The Lumenal portion of the chain corresponds to proline 22–arginine 361. Asparagine 217 is a glycosylation site (N-linked (GlcNAc...) asparagine).

This sequence belongs to the glycosyltransferase 8 family.

The protein localises to the golgi apparatus membrane. It participates in glycan metabolism; pectin biosynthesis. Its function is as follows. May be involved in pectin and/or xylans biosynthesis in cell walls. This is Probable galacturonosyltransferase-like 7 (GATL7) from Arabidopsis thaliana (Mouse-ear cress).